Consider the following 422-residue polypeptide: Glutamyl-tRNA reductase (422 aa).

Substrate is bound by residues 49 to 52, Ser-107, 112 to 114, and Gln-118; these read TCNR and EPQ. Cys-50 acts as the Nucleophile in catalysis. 187 to 192 serves as a coordination point for NADP(+); the sequence is GAGETI.

The protein belongs to the glutamyl-tRNA reductase family. Homodimer.

The catalysed reaction is (S)-4-amino-5-oxopentanoate + tRNA(Glu) + NADP(+) = L-glutamyl-tRNA(Glu) + NADPH + H(+). Its pathway is porphyrin-containing compound metabolism; protoporphyrin-IX biosynthesis; 5-aminolevulinate from L-glutamyl-tRNA(Glu): step 1/2. In terms of biological role, catalyzes the NADPH-dependent reduction of glutamyl-tRNA(Glu) to glutamate 1-semialdehyde (GSA). This chain is Glutamyl-tRNA reductase, found in Pseudomonas aeruginosa (strain ATCC 15692 / DSM 22644 / CIP 104116 / JCM 14847 / LMG 12228 / 1C / PRS 101 / PAO1).